The sequence spans 485 residues: E3 ubiquitin-protein ligase rnf8 (485 aa).

Positions 43–97 constitute an FHA domain; the sequence is VSVGRGLNVTHQILSSSCPLMISRIHCVFKLNEGRQWTVTDNKSLNGVWVNGKRI. Positions 150–232 are disordered; that stretch reads AASLSQKLKN…SSTCSDSSQH (83 aa). Positions 199–219 are enriched in basic and acidic residues; that stretch reads GERRETLKLSSRPLEEDRDKA. Over residues 221–230 the composition is skewed to low complexity; sequence SSSSTCSDSS. An RING-type zinc finger spans residues 392–430; it reads CSICSELFIEAVTLNCAHSFCQHCISEWRNRKDKCPMCW.

Belongs to the RNF8 family. Homodimer. Forms a E2-E3 ubiquitin ligase complex composed of the rnf8 homodimer and a E2 heterodimer of ube2n and ube2v2.

It is found in the nucleus. It catalyses the reaction S-ubiquitinyl-[E2 ubiquitin-conjugating enzyme]-L-cysteine + [acceptor protein]-L-lysine = [E2 ubiquitin-conjugating enzyme]-L-cysteine + N(6)-ubiquitinyl-[acceptor protein]-L-lysine.. It functions in the pathway protein modification; protein ubiquitination. In terms of biological role, E3 ubiquitin-protein ligase that plays a key role in DNA damage signaling via 2 distinct roles: by mediating the 'Lys-63'-linked ubiquitination of histones H2A and H2AX and promoting the recruitment of DNA repair proteins at double-strand breaks (DSBs) sites, and by catalyzing 'Lys-48'-linked ubiquitination to remove target proteins from DNA damage sites. Following DNA DSBs, it is recruited to the sites of damage by ATM-phosphorylated mdc1 and catalyzes the 'Lys-63'-linked ubiquitination of histones H2A and H2AX. H2A ubiquitination also mediates the ATM-dependent transcriptional silencing at regions flanking DSBs in cis, a mechanism to avoid collision between transcription and repair intermediates. Also catalyzes the formation of 'Lys-48'-linked polyubiquitin chains, leading to degradation of substrate proteins. In addition to its function in damage signaling, also plays a role in higher-order chromatin structure by mediating extensive chromatin decondensation. The chain is E3 ubiquitin-protein ligase rnf8 from Danio rerio (Zebrafish).